Here is a 339-residue protein sequence, read N- to C-terminus: Glyceraldehyde-3-phosphate dehydrogenase (339 aa).

NAD(+)-binding positions include 13–14, D35, and K84; that span reads RI. D-glyceraldehyde 3-phosphate contacts are provided by residues 156–158, T187, 216–217, and R239; these read SCT and TG. C157 functions as the Nucleophile in the catalytic mechanism. N321 contributes to the NAD(+) binding site.

The protein belongs to the glyceraldehyde-3-phosphate dehydrogenase family. In terms of assembly, homotetramer.

It is found in the cytoplasm. The catalysed reaction is D-glyceraldehyde 3-phosphate + phosphate + NAD(+) = (2R)-3-phospho-glyceroyl phosphate + NADH + H(+). It functions in the pathway carbohydrate degradation; glycolysis; pyruvate from D-glyceraldehyde 3-phosphate: step 1/5. The polypeptide is Glyceraldehyde-3-phosphate dehydrogenase (G3PD) (Brugia malayi (Filarial nematode worm)).